Reading from the N-terminus, the 118-residue chain is Large ribosomal subunit protein uL22c (118 aa).

Belongs to the universal ribosomal protein uL22 family. In terms of assembly, part of the 50S ribosomal subunit.

It localises to the plastid. It is found in the chloroplast. Its function is as follows. This protein binds specifically to 23S rRNA. Functionally, the globular domain of the protein is located near the polypeptide exit tunnel on the outside of the subunit, while an extended beta-hairpin is found that lines the wall of the exit tunnel in the center of the 70S ribosome. The protein is Large ribosomal subunit protein uL22c (rpl22) of Rhodomonas salina (Cryptomonas salina).